Here is a 230-residue protein sequence, read N- to C-terminus: NAD(P)H-hydrate epimerase (230 aa).

The YjeF N-terminal domain maps to 11 to 218; it reads AIDVDQELFT…ALQRKYELNL (208 aa). 61 to 65 is a (6S)-NADPHX binding site; sequence NNGGD. The K(+) site is built by N62 and D126. Residues 130–136 and D159 contribute to the (6S)-NADPHX site; that span reads GFSFKPP. Residue S162 coordinates K(+).

This sequence belongs to the NnrE/AIBP family. Requires K(+) as cofactor.

It carries out the reaction (6R)-NADHX = (6S)-NADHX. The catalysed reaction is (6R)-NADPHX = (6S)-NADPHX. In terms of biological role, catalyzes the epimerization of the S- and R-forms of NAD(P)HX, a damaged form of NAD(P)H that is a result of enzymatic or heat-dependent hydration. This is a prerequisite for the S-specific NAD(P)H-hydrate dehydratase to allow the repair of both epimers of NAD(P)HX. The protein is NAD(P)H-hydrate epimerase of Drosophila erecta (Fruit fly).